Here is a 200-residue protein sequence, read N- to C-terminus: Probable GTP-binding protein EngB (200 aa).

One can recognise an EngB-type G domain in the interval 26–200; that stretch reads SIPEVALAGR…IYEIAQCIKK (175 aa). GTP-binding positions include 34–41, 61–65, 80–83, 147–150, and 179–181; these read GRSNVGKS, GCTRQ, DLPG, TKID, and VSS. Residues S41 and T63 each coordinate Mg(2+).

It belongs to the TRAFAC class TrmE-Era-EngA-EngB-Septin-like GTPase superfamily. EngB GTPase family. It depends on Mg(2+) as a cofactor.

Functionally, necessary for normal cell division and for the maintenance of normal septation. This is Probable GTP-binding protein EngB from Ehrlichia ruminantium (strain Gardel).